We begin with the raw amino-acid sequence, 446 residues long: Vacuolar cation/proton exchanger 4 (446 aa).

The span at 1-16 (MSSISTESSSNLSLLE) shows a compositional bias: low complexity. The segment at 1–33 (MSSISTESSSNLSLLENGGGGSDKPTAETSRRV) is disordered. At 1 to 69 (MSSISTESSS…MRRILTNLQE (69 aa)) the chain is on the cytoplasmic side. A helical transmembrane segment spans residues 70–90 (VLLGTKLFILFPAVPLAVVAH). Topologically, residues 91-96 (RYDCPR) are extracellular. The helical transmembrane segment at 97–117 (AWVFALSLLGLTPLAERISFL) threads the bilayer. At 118-128 (TEQIAFHTGPT) the chain is on the cytoplasmic side. Residues 129-149 (VGGLMNATCGNATEMIIAILA) traverse the membrane as a helical segment. Residues 138-173 (GNATEMIIAILAVGQRKMRIVKLSLLGSILSNLLFV) form a cation selection region. Over 150-162 (VGQRKMRIVKLSL) the chain is Extracellular. Residues 163–183 (LGSILSNLLFVLGTSLFLGGI) traverse the membrane as a helical segment. Topologically, residues 184 to 196 (SNLRKHQSFDPRQ) are cytoplasmic. The helical transmembrane segment at 197–217 (GDMNSMLLYLALLCQTLPMIM) threads the bilayer. The Extracellular portion of the chain corresponds to 218–238 (RFTMEAEEYDGSDVVVLSRAS). The helical transmembrane segment at 239-259 (SFVMLIAYLAFLIFHLFSSHL) threads the bilayer. Over 260–285 (SPPPPPLPQREDVHDDDVSDKEEEGA) the chain is Cytoplasmic. Residues 286–306 (VIGMWSAIFWLIIMTLLVALL) form a helical membrane-spanning segment. Residues 307–319 (SDYLVSTIQDAAD) are Extracellular-facing. A helical membrane pass occupies residues 320-340 (SWGLSVGFIGIILLPIVGNAA). The cation selection stretch occupies residues 337-372 (GNAAEHAGAVIFAFRNKLDITLGIALGSATQIALFV). The Cytoplasmic portion of the chain corresponds to 341–359 (EHAGAVIFAFRNKLDITLG). A helical transmembrane segment spans residues 360–380 (IALGSATQIALFVVPVTVLVA). At 381–388 (WTMGIEMD) the chain is on the extracellular side. A helical membrane pass occupies residues 389–409 (LNFNLLETACFALSILVTSLV). Topologically, residues 410-416 (LQDGTSN) are cytoplasmic. The chain crosses the membrane as a helical span at residues 417-437 (YMKGLVLLLCYVVIAACFFVS). Topologically, residues 438–446 (NSPSSKLLF) are extracellular.

Belongs to the Ca(2+):cation antiporter (CaCA) (TC 2.A.19) family. Cation/proton exchanger (CAX) subfamily. In terms of tissue distribution, expressed at low levels in all tissues.

The protein localises to the vacuole membrane. Functionally, vacuolar cation/proton exchanger (CAX). Translocates Ca(2+) and other metal ions into vacuoles using the proton gradient formed by H(+)-ATPase and H(+)-pyrophosphatase. Cation selectivity transport in tobacco root tonoplast vesicles is Cd(2+)&gt;Zn(2+)&gt;&gt;Ca(2+)&gt;&gt;&gt;Mn(2+). The protein is Vacuolar cation/proton exchanger 4 (CAX4) of Arabidopsis thaliana (Mouse-ear cress).